The chain runs to 982 residues: E3 ubiquitin-protein ligase CBL-B (982 aa).

Residues 35-167 (PPKQAAADRR…KAIFPNGQFQ (133 aa)) form a 4H region. One can recognise a Cbl-PTB domain in the interval 35–343 (PPKQAAADRR…GRSYNPDLTG (309 aa)). The interval 168-240 (GDNFRITKAD…FEFDIFTRLF (73 aa)) is EF-hand-like. Ca(2+) is bound by residues aspartate 221, threonine 223, asparagine 225, tyrosine 227, and glutamate 232. Residues 241-343 (QPWGSILRNW…GRSYNPDLTG (103 aa)) form an SH2-like region. Serine 282 carries the post-translational modification Phosphoserine; by PKC/PRKCQ. Residue arginine 286 coordinates 4-O-phospho-L-tyrosine. Residues 344–372 (LCEPTPHDHIKVTQEQYELYCEMGSTFQL) are linker. Tyrosine 363 carries the post-translational modification Phosphotyrosine. An RING-type zinc finger spans residues 373 to 412 (CKICAENDKDVKIEPCGHLMCTSCLTAWQESDGQGCPFCR). Residues 465 to 588 (ASVRKCTDRQ…SVPSRDQPMP (124 aa)) form a disordered region. Over residues 473–486 (RQNSPVTSPGSSPL) the composition is skewed to polar residues. A phosphoserine mark is found at serine 476, serine 480, serine 484, serine 521, serine 525, and serine 529. An interaction with VAV1 region spans residues 543-567 (PLPAPPPPLRDPPPPPERPPPIPPD). Residues 544–566 (LPAPPPPLRDPPPPPERPPPIPP) show a composition bias toward pro residues. Serine 633 carries the phosphoserine modification. 2 positions are modified to phosphotyrosine: tyrosine 664 and tyrosine 708. Disordered stretches follow at residues 702-723 (EDDD…SQPS) and 745-929 (THGA…EAAL). Over residues 714 to 723 (HPVSLNSQPS) the composition is skewed to polar residues. The span at 819-828 (PSLPPPPPPA) shows a compositional bias: pro residues. Low complexity predominate over residues 838–848 (PPGSSSRPSSG). The segment covering 884–899 (RASQDYDQLPSSSDGS) has biased composition (polar residues). Tyrosine 889 carries the phosphotyrosine modification. An interaction with SH3KBP1 region spans residues 891–927 (QLPSSSDGSQAPARPPKPRPRRTAPEIHHRKPHGPEA). Basic residues predominate over residues 906 to 922 (PKPRPRRTAPEIHHRKP). One can recognise a UBA domain in the interval 931 to 970 (NVDAKIAKLMGEGYAFEEVKRALEIAQNNVEVARSILREF).

In terms of assembly, interacts with SH3 domain-containing proteins LCK, CRK and SORBS1. Interacts with LCP2 and ZAP70. Interacts with CBL. Interacts with SH3 domain-containing proteins VAV1, FYN, FGR, PLCG1, GRB2, CRKL, PIK3R1 and SH3KBP1/CIN85. Identified in heterotrimeric complexes with SH3KBP1/CIN85, CD2AP and ARHGEF7, where one CBLB peptide binds two copies of the other protein. Interacts with poly-ubiquitinated proteins. Dimerization is required for the binding of poly-ubiquitin, but not for the binding of mono-ubiquitin. Interacts with EGFR (phosphorylated). Interacts with IFT20. In terms of processing, phosphorylated on tyrosine and serine residues upon TCR or BCR activation. Phosphorylated on Tyr-664 and Tyr-708 in adipocytes following insulin stimulation. Post-translationally, auto-ubiquitinated upon EGF-mediated cell activation or upon T-cell costimulation by CD28; which promotes proteasomal degradation.

It is found in the cytoplasm. The enzyme catalyses S-ubiquitinyl-[E2 ubiquitin-conjugating enzyme]-L-cysteine + [acceptor protein]-L-lysine = [E2 ubiquitin-conjugating enzyme]-L-cysteine + N(6)-ubiquitinyl-[acceptor protein]-L-lysine.. Its pathway is protein modification; protein ubiquitination. Functionally, E3 ubiquitin-protein ligase which accepts ubiquitin from specific E2 ubiquitin-conjugating enzymes, and transfers it to substrates, generally promoting their degradation by the proteasome. Negatively regulates TCR (T-cell receptor), BCR (B-cell receptor) and FCER1 (high affinity immunoglobulin epsilon receptor) signal transduction pathways. In naive T-cells, inhibits VAV1 activation upon TCR engagement and imposes a requirement for CD28 costimulation for proliferation and IL-2 production. Also acts by promoting PIK3R1/p85 ubiquitination, which impairs its recruitment to the TCR and subsequent activation. In activated T-cells, inhibits PLCG1 activation and calcium mobilization upon restimulation and promotes anergy. In B-cells, acts by ubiquitinating SYK and promoting its proteasomal degradation. Slightly promotes SRC ubiquitination. May be involved in EGFR ubiquitination and internalization. May be functionally coupled with the E2 ubiquitin-protein ligase UB2D3. In association with CBL, required for proper feedback inhibition of ciliary platelet-derived growth factor receptor-alpha (PDGFRA) signaling pathway via ubiquitination and internalization of PDGFRA. The polypeptide is E3 ubiquitin-protein ligase CBL-B (Cblb) (Mus musculus (Mouse)).